The following is a 28-amino-acid chain: Venom protein (28 aa).

The disordered stretch occupies residues 1-28; that stretch reads KEGYPDGQNGKKIPCAINDNISKTXEQA. The span at 19–28 shows a compositional bias: polar residues; the sequence is DNISKTXEQA.

Expressed by the venom gland.

The protein resides in the secreted. Functionally, causes symptoms of mild intoxication and transient paralysis in insects (A.domestica). This is Venom protein from Rhopalurus junceus (Caribbean blue scorpion).